We begin with the raw amino-acid sequence, 54 residues long: Large ribosomal subunit protein bL33 (54 aa).

The protein belongs to the bacterial ribosomal protein bL33 family.

The polypeptide is Large ribosomal subunit protein bL33 (Caldicellulosiruptor saccharolyticus (strain ATCC 43494 / DSM 8903 / Tp8T 6331)).